The following is a 202-amino-acid chain: Holliday junction branch migration complex subunit RuvA (202 aa).

Positions 1 to 64 (MIGRLRGSLA…EDAHLLYGFY (64 aa)) are domain I. Residues 65–143 (EKRERELFRE…AWESLPGTFT (79 aa)) form a domain II region. The tract at residues 144-153 (LVSNGPNQAE) is flexible linker. The tract at residues 154-202 (PVASAESDAVSALISLGYKPQEASKAVSAIKEKDLSSADLIRRALKGMG) is domain III.

Belongs to the RuvA family. In terms of assembly, homotetramer. Forms an RuvA(8)-RuvB(12)-Holliday junction (HJ) complex. HJ DNA is sandwiched between 2 RuvA tetramers; dsDNA enters through RuvA and exits via RuvB. An RuvB hexamer assembles on each DNA strand where it exits the tetramer. Each RuvB hexamer is contacted by two RuvA subunits (via domain III) on 2 adjacent RuvB subunits; this complex drives branch migration. In the full resolvosome a probable DNA-RuvA(4)-RuvB(12)-RuvC(2) complex forms which resolves the HJ.

Its subcellular location is the cytoplasm. In terms of biological role, the RuvA-RuvB-RuvC complex processes Holliday junction (HJ) DNA during genetic recombination and DNA repair, while the RuvA-RuvB complex plays an important role in the rescue of blocked DNA replication forks via replication fork reversal (RFR). RuvA specifically binds to HJ cruciform DNA, conferring on it an open structure. The RuvB hexamer acts as an ATP-dependent pump, pulling dsDNA into and through the RuvAB complex. HJ branch migration allows RuvC to scan DNA until it finds its consensus sequence, where it cleaves and resolves the cruciform DNA. This chain is Holliday junction branch migration complex subunit RuvA, found in Pseudomonas savastanoi pv. phaseolicola (strain 1448A / Race 6) (Pseudomonas syringae pv. phaseolicola (strain 1448A / Race 6)).